A 442-amino-acid polypeptide reads, in one-letter code: GTPase Der (442 aa).

EngA-type G domains are found at residues 2-168 (ATVL…EEAG) and 182-356 (LKVA…EKID). GTP-binding positions include 8–15 (GRPNVGKS), 55–59 (DTCGL), 118–121 (NKVE), 188–195 (GKPNAGKS), 235–239 (DTAGM), and 301–304 (NKSD). The KH-like domain occupies 357-442 (LRIPTGLLNN…PIFIKLRRKK (86 aa)).

It belongs to the TRAFAC class TrmE-Era-EngA-EngB-Septin-like GTPase superfamily. EngA (Der) GTPase family. Associates with the 50S ribosomal subunit.

GTPase that plays an essential role in the late steps of ribosome biogenesis. In Kosmotoga olearia (strain ATCC BAA-1733 / DSM 21960 / TBF 19.5.1), this protein is GTPase Der.